We begin with the raw amino-acid sequence, 397 residues long: ATP-dependent RNA helicase eIF4A (397 aa).

The short motif at 23–51 is the Q motif element; sequence YKFDDLNLKPNIVRGIFGYGYETPSAIQQ. The 171-residue stretch at 54-224 folds into the Helicase ATP-binding domain; that stretch reads ILPITEGRDV…TKFMNNPVRI (171 aa). 67-74 contributes to the ATP binding site; it reads AQSGTGKT. Residues 172–175 carry the DEAD box motif; the sequence is DEAD. The 142-residue stretch at 255–396 folds into the Helicase C-terminal domain; it reads DLYDSISVTQ…EMPADIGSLF (142 aa).

This sequence belongs to the DEAD box helicase family. eIF4A subfamily. In terms of assembly, component of the eIF4F complex, which composition varies with external and internal environmental conditions. It is composed of at least eIF4A, eIF4E and eIF4G.

It localises to the cytoplasm. It carries out the reaction ATP + H2O = ADP + phosphate + H(+). Functionally, ATP-dependent RNA helicase which is a subunit of the eIF4F complex involved in cap recognition and is required for mRNA binding to ribosome. In the current model of translation initiation, eIF4A unwinds RNA secondary structures in the 5'-UTR of mRNAs which is necessary to allow efficient binding of the small ribosomal subunit, and subsequent scanning for the initiator codon. The polypeptide is ATP-dependent RNA helicase eIF4A (TIF1) (Lodderomyces elongisporus (strain ATCC 11503 / CBS 2605 / JCM 1781 / NBRC 1676 / NRRL YB-4239) (Yeast)).